The sequence spans 121 residues: MSRARSGKVNKNRHKKILKLAKGYRGRAKNCFRIAIQKVEKALQYSYRDRRNRKRQFRALWIQRINAAVRQYDITYSQFINGLKQANITVDRKVMADLAVHNADSFVHLVELTKKSLAKTA.

Belongs to the bacterial ribosomal protein bL20 family.

Functionally, binds directly to 23S ribosomal RNA and is necessary for the in vitro assembly process of the 50S ribosomal subunit. It is not involved in the protein synthesizing functions of that subunit. The chain is Large ribosomal subunit protein bL20 from Orientia tsutsugamushi (strain Ikeda) (Rickettsia tsutsugamushi).